Here is a 456-residue protein sequence, read N- to C-terminus: Bifunctional protein GlmU (456 aa).

Residues 1–229 (MSNSAMSVVI…LSEVEGVNNR (229 aa)) are pyrophosphorylase. Residues 11–14 (LAAG), Lys25, Gln76, 81–82 (GT), 103–105 (YGD), Gly140, Glu154, Asn169, and Asn227 each bind UDP-N-acetyl-alpha-D-glucosamine. Mg(2+) is bound at residue Asp105. A Mg(2+)-binding site is contributed by Asn227. The linker stretch occupies residues 230–250 (LQLARLERVYQAEQAEKLLLA). Residues 251 to 456 (GVMLRDPARF…QGWQRPVKKK (206 aa)) form an N-acetyltransferase region. Residues Arg333 and Lys351 each contribute to the UDP-N-acetyl-alpha-D-glucosamine site. Residue His363 is the Proton acceptor of the active site. Positions 366 and 377 each coordinate UDP-N-acetyl-alpha-D-glucosamine. Acetyl-CoA is bound by residues Ala380, 386 to 387 (NY), Ser405, Ala423, and Arg440.

The protein in the N-terminal section; belongs to the N-acetylglucosamine-1-phosphate uridyltransferase family. In the C-terminal section; belongs to the transferase hexapeptide repeat family. Homotrimer. Requires Mg(2+) as cofactor.

The protein resides in the cytoplasm. It catalyses the reaction alpha-D-glucosamine 1-phosphate + acetyl-CoA = N-acetyl-alpha-D-glucosamine 1-phosphate + CoA + H(+). It carries out the reaction N-acetyl-alpha-D-glucosamine 1-phosphate + UTP + H(+) = UDP-N-acetyl-alpha-D-glucosamine + diphosphate. It functions in the pathway nucleotide-sugar biosynthesis; UDP-N-acetyl-alpha-D-glucosamine biosynthesis; N-acetyl-alpha-D-glucosamine 1-phosphate from alpha-D-glucosamine 6-phosphate (route II): step 2/2. Its pathway is nucleotide-sugar biosynthesis; UDP-N-acetyl-alpha-D-glucosamine biosynthesis; UDP-N-acetyl-alpha-D-glucosamine from N-acetyl-alpha-D-glucosamine 1-phosphate: step 1/1. It participates in bacterial outer membrane biogenesis; LPS lipid A biosynthesis. Functionally, catalyzes the last two sequential reactions in the de novo biosynthetic pathway for UDP-N-acetylglucosamine (UDP-GlcNAc). The C-terminal domain catalyzes the transfer of acetyl group from acetyl coenzyme A to glucosamine-1-phosphate (GlcN-1-P) to produce N-acetylglucosamine-1-phosphate (GlcNAc-1-P), which is converted into UDP-GlcNAc by the transfer of uridine 5-monophosphate (from uridine 5-triphosphate), a reaction catalyzed by the N-terminal domain. This chain is Bifunctional protein GlmU, found in Klebsiella pneumoniae subsp. pneumoniae (strain ATCC 700721 / MGH 78578).